We begin with the raw amino-acid sequence, 540 residues long: Phosphoenolpyruvate carboxykinase (ATP) (540 aa).

Position 65 (arginine 65) interacts with substrate. Lysine 87 bears the N6-acetyllysine mark. 2 residues coordinate substrate: tyrosine 207 and lysine 213. Residues lysine 213, histidine 232, and 248 to 256 each bind ATP; that span reads GLSGTGKTT. Residues lysine 213 and histidine 232 each contribute to the Mn(2+) site. A Mn(2+)-binding site is contributed by aspartate 269. ATP contacts are provided by residues glutamate 297, arginine 333, 449–450, and threonine 455; that span reads RI. Arginine 333 is a binding site for substrate. Lysine 523 is subject to N6-acetyllysine.

The protein belongs to the phosphoenolpyruvate carboxykinase (ATP) family. Monomer. Mn(2+) is required as a cofactor.

The protein resides in the cytoplasm. It carries out the reaction oxaloacetate + ATP = phosphoenolpyruvate + ADP + CO2. It functions in the pathway carbohydrate biosynthesis; gluconeogenesis. Functionally, involved in the gluconeogenesis. Catalyzes the conversion of oxaloacetate (OAA) to phosphoenolpyruvate (PEP) through direct phosphoryl transfer between the nucleoside triphosphate and OAA. The polypeptide is Phosphoenolpyruvate carboxykinase (ATP) (Escherichia coli O45:K1 (strain S88 / ExPEC)).